We begin with the raw amino-acid sequence, 471 residues long: UDP-N-acetylmuramate--L-alanine ligase (471 aa).

114-120 contributes to the ATP binding site; that stretch reads GTHGKTT.

This sequence belongs to the MurCDEF family.

The protein resides in the cytoplasm. It carries out the reaction UDP-N-acetyl-alpha-D-muramate + L-alanine + ATP = UDP-N-acetyl-alpha-D-muramoyl-L-alanine + ADP + phosphate + H(+). Its pathway is cell wall biogenesis; peptidoglycan biosynthesis. In terms of biological role, cell wall formation. The polypeptide is UDP-N-acetylmuramate--L-alanine ligase (Methylobacterium nodulans (strain LMG 21967 / CNCM I-2342 / ORS 2060)).